We begin with the raw amino-acid sequence, 376 residues long: MKKKILAATAILLAAIANTGVADNTPFYVGADLSYVNEMESCGATYRDQGKKVDPFQLFADKGADLVRVRLWHNATWTKYSDLKDVSKTLKRAKNAGMKTLLDFHYSDTWTDPEKQFIPKAWAHITDTKELAKALYDYTTDTLASLDQQQLLPNLVQVGNETNIEILQAEDTLVHGIPNWQRNATLLNSGVNAVRDYSKKTGKPIQVVLHIAQPENALWWFKQAKENGVIDYDVIGLSYYPQWSEYSLPQLPDAIAELQNTYHKPVMIVETAYPWTLHNFDQAGNVLGEKAVQPEFPASPRGQLTYLLTLTQLVKSAGGMGVIYWEPAWVSTRCRTLWGKGSHWENASFFDATRKNNALPAFLFFKADYQASAQAE.

A signal peptide spans 1–17 (MKKKILAATAILLAAIA). Glutamate 161 serves as the catalytic Proton donor. Glutamate 270 (nucleophile) is an active-site residue. Residues aspartate 281 and asparagine 285 each coordinate Ca(2+).

This sequence belongs to the glycosyl hydrolase 53 family. It depends on Ca(2+) as a cofactor.

It catalyses the reaction The enzyme specifically hydrolyzes (1-&gt;4)-beta-D-galactosidic linkages in type I arabinogalactans.. In Cellvibrio japonicus (strain Ueda107) (Pseudomonas fluorescens subsp. cellulosa), this protein is Arabinogalactan endo-beta-1,4-galactanase (ganB).